The following is a 209-amino-acid chain: Ubiquitin-conjugating enzyme E2 S (209 aa).

In terms of domain architecture, UBC core spans 14–160 (QTIRQVMREL…ARMMTEIHAQ (147 aa)). C98 serves as the catalytic Glycyl thioester intermediate. Positions 165–209 (GVGATGDAKDDGGPSTKKHAGLDKKLQDKKKEKLLKEKKRMLKRL) are disordered. The segment covering 184-199 (AGLDKKLQDKKKEKLL) has biased composition (basic and acidic residues). The span at 200–209 (KEKKRMLKRL) shows a compositional bias: basic residues.

The protein belongs to the ubiquitin-conjugating enzyme family.

The enzyme catalyses S-ubiquitinyl-[E1 ubiquitin-activating enzyme]-L-cysteine + [E2 ubiquitin-conjugating enzyme]-L-cysteine = [E1 ubiquitin-activating enzyme]-L-cysteine + S-ubiquitinyl-[E2 ubiquitin-conjugating enzyme]-L-cysteine.. It functions in the pathway protein modification; protein ubiquitination. In terms of biological role, catalyzes the covalent attachment of ubiquitin to other proteins. Acts as an essential factor of the anaphase promoting complex/cyclosome (APC/C), a cell cycle-regulated ubiquitin ligase that controls progression through mitosis. Acts by specifically elongating polyubiquitin chains initiated by the E2 enzyme vih/UbcH10 on APC/C substrates, enhancing the degradation of APC/C substrates by the proteasome and promoting mitotic exit. The sequence is that of Ubiquitin-conjugating enzyme E2 S from Drosophila simulans (Fruit fly).